We begin with the raw amino-acid sequence, 266 residues long: UPF0294 protein YafD (266 aa).

It belongs to the UPF0294 family.

It localises to the cytoplasm. This is UPF0294 protein YafD from Salmonella agona (strain SL483).